Here is a 361-residue protein sequence, read N- to C-terminus: Glycerophosphodiester phosphodiesterase GDPD1, chloroplastic (361 aa).

A chloroplast-targeting transit peptide spans 1–53 (MSLKAIHVSEVPSLDHFPENPSLICSSRKANNKFVVVGHRGHGMNMSQSPDLR). The GP-PDE domain occupies 54–323 (FSALKENSIL…DHVEEITEAV (270 aa)).

This sequence belongs to the glycerophosphoryl diester phosphodiesterase family. The cofactor is Mg(2+). In terms of tissue distribution, expressed in roots, shoots, rosette leaves, stems, flowers and siliques.

Its subcellular location is the plastid. It is found in the chloroplast. The catalysed reaction is a sn-glycero-3-phosphodiester + H2O = an alcohol + sn-glycerol 3-phosphate + H(+). Hydrolyzes glycerolphosphoglycerol, glycerophosphocholine and glycerophosphoethanolamine in vitro. May be involved in release of inorganic phosphate (Pi) from phospholipids during Pi starvation. This is Glycerophosphodiester phosphodiesterase GDPD1, chloroplastic from Arabidopsis thaliana (Mouse-ear cress).